The sequence spans 1009 residues: Putative receptor-like protein 8 (1009 aa).

Residues 1-22 (MKTNFVILLLLLCVFAISPSQQ) form the signal peptide. The Extracellular segment spans residues 23-961 (EEINQHNPGI…EEDDEAPVDM (939 aa)). Residues asparagine 159 and asparagine 197 are each glycosylated (N-linked (GlcNAc...) asparagine). An LRR 1; degenerate repeat occupies 204–231 (FEEVRSLELSAGLNGFVDNVEGYKSLRK). LRR repeat units lie at residues 232 to 255 (LKNL…PFIN), 257 to 281 (ATSL…EIKD), 282 to 305 (LTNL…LTHL), 306 to 329 (KKLK…VVCE), 331 to 354 (KNLW…LGRL), 355 to 377 (NKLR…TFNR), 379 to 402 (ESLE…PLAN), 404 to 427 (TKLK…SEPK), 442 to 465 (LEKI…ATIV), 466 to 490 (HELQ…GYAL), 492 to 514 (NLLR…MGEM), 515 to 538 (VNIT…FVTG), 540 to 565 (FSLK…SFTS), 567 to 587 (EELR…LLSS), 588 to 612 (NTTL…MSNL), 613 to 636 (SGLT…LLAI), 638 to 660 (FLSL…VGGE), 662 to 681 (GIKL…DTLL), 682 to 705 (EKVQ…VNTE), 707 to 728 (IYIL…LCDL), 729 to 752 (RNIR…LYNL), 819 to 842 (LDYM…ELGS), 843 to 866 (LSKL…SFSN), 867 to 891 (LKDI…LTNL), and 893 to 916 (SLVV…QFNT). A glycan (N-linked (GlcNAc...) asparagine) is linked at asparagine 267. Residues asparagine 390 and asparagine 402 are each glycosylated (N-linked (GlcNAc...) asparagine). N-linked (GlcNAc...) asparagine glycosylation is found at asparagine 497, asparagine 516, asparagine 526, and asparagine 551. Asparagine 588 and asparagine 611 each carry an N-linked (GlcNAc...) asparagine glycan. 2 N-linked (GlcNAc...) asparagine glycosylation sites follow: asparagine 716 and asparagine 751. 4 N-linked (GlcNAc...) asparagine glycosylation sites follow: asparagine 850, asparagine 890, asparagine 903, and asparagine 934. Residues 934 to 955 (NRSCDAKKTSDESENGGEEEDD) form a disordered region. Acidic residues predominate over residues 945–955 (ESENGGEEEDD). A helical membrane pass occupies residues 962-982 (LAFYFSSASTYVTTLIGIFIL). The Cytoplasmic segment spans residues 983-1009 (MCFDCPLRRAWLRIVDASIASVKSMLP).

This sequence belongs to the RLP family.

Its subcellular location is the cell membrane. This is Putative receptor-like protein 8 from Arabidopsis thaliana (Mouse-ear cress).